The primary structure comprises 715 residues: Methylmalonyl-CoA mutase large subunit (715 aa).

The (R)-methylmalonyl-CoA site is built by Tyr-70, Met-73, Arg-77, Thr-80, Arg-82, Tyr-84, and Ser-109. Residues Phe-112 and Ala-134 each coordinate cob(II)alamin. Residues Thr-190 and Gln-192 each contribute to the (R)-methylmalonyl-CoA site. 2 residues coordinate cob(II)alamin: Val-201 and Arg-202. Residues Arg-202, His-239, Arg-278, and Ser-280 each contribute to the (R)-methylmalonyl-CoA site. Cob(II)alamin-binding residues include Gly-328, Glu-365, Ala-368, Gly-599, His-600, Asp-601, Arg-602, Ser-645, Leu-647, Gly-676, and Thr-699. Positions 587–715 (QPRIMIAKMG…AKVLEILLEE (129 aa)) constitute a B12-binding domain.

The protein belongs to the methylmalonyl-CoA mutase family. As to quaternary structure, heterodimer of an alpha and a beta chain. Adenosylcob(III)alamin serves as cofactor.

The catalysed reaction is (R)-methylmalonyl-CoA = succinyl-CoA. In terms of biological role, catalyzes the isomerization of succinyl-CoA to methylmalonyl-CoA during synthesis of propionate from tricarboxylic acid-cycle intermediates. This chain is Methylmalonyl-CoA mutase large subunit (mutB), found in Porphyromonas gingivalis (strain ATCC BAA-308 / W83).